We begin with the raw amino-acid sequence, 241 residues long: CD99 antigen-like protein 2 (241 aa).

The first 23 residues, 1 to 23 (MAKWGSPFVFALACLALSWRVYG), serve as a signal peptide directing secretion. Topologically, residues 24 to 173 (DDFDLYDALG…TGFGSQAETG (150 aa)) are extracellular. The segment at 30–168 (DALGDPTEKP…NDGSDTGFGS (139 aa)) is disordered. Positions 143–154 (GGGGGGGGGRAT) are enriched in gly residues. A helical transmembrane segment spans residues 174–196 (TIAGIASALAMALIGAVSSYISY). The Cytoplasmic portion of the chain corresponds to 197–241 (QQKKFCFSIQEGLNAEYVKGEHMEAVVSEEPQVKYSVVESQSAIP).

Belongs to the CD99 family.

It is found in the cell membrane. It localises to the cell junction. Functionally, may function as a homophilic adhesion molecule. The polypeptide is CD99 antigen-like protein 2 (cd99l2) (Xenopus tropicalis (Western clawed frog)).